Reading from the N-terminus, the 653-residue chain is Bifunctional lysine-specific demethylase and histidyl-hydroxylase NO66 (653 aa).

A compositionally biased stretch (low complexity) spans Met1–Ser12. Disordered stretches follow at residues Met1–Ala50 and Phe65–Thr137. A compositionally biased stretch (polar residues) spans Gln13–Thr26. Ser44 carries the post-translational modification Phosphoserine. Residues Ser72 to Lys86 are compositionally biased toward low complexity. At Ser131 the chain carries Phosphoserine. A Phosphothreonine modification is found at Thr137. Ser138 is subject to Phosphoserine. The disordered stretch occupies residues Ala184–Asp208. Residues Asn194 to Asp208 are compositionally biased toward basic and acidic residues. Positions Phe300–Val450 constitute a JmjC domain. Residues His351, Asp353, and His416 each coordinate Fe cation.

Belongs to the ROX family. NO66 subfamily. Requires Fe(2+) as cofactor.

It localises to the nucleus. It carries out the reaction N(6),N(6)-dimethyl-L-lysyl(36)-[histone H3] + 2 2-oxoglutarate + 2 O2 = L-lysyl(36)-[histone H3] + 2 formaldehyde + 2 succinate + 2 CO2. Oxygenase that can act as both a histone lysine demethylase and a ribosomal histidine hydroxylase. Specifically demethylates 'Lys-4' (H3K4me) and 'Lys-36' (H3K36me) of histone H3, thereby playing a central role in histone code. The chain is Bifunctional lysine-specific demethylase and histidyl-hydroxylase NO66 from Drosophila melanogaster (Fruit fly).